The following is a 431-amino-acid chain: Adenylosuccinate synthetase (431 aa).

GTP contacts are provided by residues 13–19 and 41–43; these read GDEGKGK and GHT. The active-site Proton acceptor is D14. Residues D14 and G41 each contribute to the Mg(2+) site. IMP contacts are provided by residues 14 to 17, 39 to 42, T130, R144, Q225, T240, and R304; these read DEGK and NAGH. H42 functions as the Proton donor in the catalytic mechanism. 300–306 contacts substrate; the sequence is ATTGRAR. Residues R306, 332-334, and 414-416 contribute to the GTP site; these read KLD and STG.

This sequence belongs to the adenylosuccinate synthetase family. In terms of assembly, homodimer. The cofactor is Mg(2+).

It is found in the cytoplasm. It carries out the reaction IMP + L-aspartate + GTP = N(6)-(1,2-dicarboxyethyl)-AMP + GDP + phosphate + 2 H(+). It participates in purine metabolism; AMP biosynthesis via de novo pathway; AMP from IMP: step 1/2. Its function is as follows. Plays an important role in the de novo pathway of purine nucleotide biosynthesis. Catalyzes the first committed step in the biosynthesis of AMP from IMP. The chain is Adenylosuccinate synthetase from Chromohalobacter salexigens (strain ATCC BAA-138 / DSM 3043 / CIP 106854 / NCIMB 13768 / 1H11).